A 182-amino-acid chain; its full sequence is MKHPKRPVIRSTTVIGVLRDGKAALGSDGQMTLGNTVVKHSTRKIRSLYQGRLLAGFAGATADAITLLDRFEEKLEAYNGKLERAAVELARDWRTDKYLRRLEAMLAIVSSERALIISGTGDVIEPEDGIVAIGSGSMYALAAARSLMKHTGLSARDIVRESLETAAEICIYTNNHIVVEEV.

Residue T12 is part of the active site. Residues A167, C170, and T173 each coordinate Na(+).

Belongs to the peptidase T1B family. HslV subfamily. As to quaternary structure, a double ring-shaped homohexamer of HslV is capped on each side by a ring-shaped HslU homohexamer. The assembly of the HslU/HslV complex is dependent on binding of ATP.

The protein resides in the cytoplasm. It carries out the reaction ATP-dependent cleavage of peptide bonds with broad specificity.. Allosterically activated by HslU binding. Its function is as follows. Protease subunit of a proteasome-like degradation complex believed to be a general protein degrading machinery. The chain is ATP-dependent protease subunit HslV from Chlorobium luteolum (strain DSM 273 / BCRC 81028 / 2530) (Pelodictyon luteolum).